Reading from the N-terminus, the 521-residue chain is Importin subunit alpha-4 (521 aa).

Residues 1 to 29 (MAENPGLENHRIKSFKNKGRDVETMRRHR) are disordered. Ala2 carries the N-acetylalanine modification. An IBB domain is found at 2–58 (AENPGLENHRIKSFKNKGRDVETMRRHRNEVTVELRKNKRDEHLLKKRNVPQEESLE). Residues 18 to 29 (KGRDVETMRRHR) show a composition bias toward basic and acidic residues. A Nuclear localization signal motif is present at residues 43–52 (EHLLKKRNVP). 2 positions are modified to phosphoserine: Ser56 and Ser60. The stretch at 66 to 106 (FKAQNVTLEAILQNATSDNPVVQLSAVQAARKLLSSDRNPP) is one ARM 1; truncated repeat. ARM repeat units lie at residues 107 to 149 (IDDL…TSAQ), 150 to 194 (TQAV…CRDY), 195 to 233 (VISL…NKDP), 234 to 278 (PPPM…EQIQ), 279 to 318 (MVID…TDEQ), 319 to 360 (TQVV…NQQQ), 361 to 400 (VQAV…ISGR), and 401 to 443 (KDQV…IMAG). Residues 137-229 (WALTNIASGT…VTWVIVNLCR (93 aa)) are NLS binding site (major). The segment at 306-394 (RAVGNIVTGT…QKEAAWAISN (89 aa)) is NLS binding site (minor). The ARM 10; atypical repeat unit spans residues 447–485 (STIAEIIEECGGLEKIEVLQQHENEDIYKLAFEIIDQYF). Position 484 is a phosphotyrosine (Tyr484).

This sequence belongs to the importin alpha family. As to quaternary structure, forms a complex with importin subunit beta-1. Interacts with DDX21. Interacts with NCBP1, NCBP2/CBP20 and NCBP3. Interacts with RCC1. Interacts with ZC3H11A. Detected more or less in all tissues examined (Ehrlich ascites tumor cells, testis, kidney, spleen, liver, heart, lung, thymus, skeletal muscle, cerebellum and brain (without cerebellum)).

Its subcellular location is the cytoplasm. It localises to the nucleus. Functions in nuclear protein import as an adapter protein for nuclear receptor KPNB1. Binds specifically and directly to substrates containing either a simple or bipartite NLS motif. Docking of the importin/substrate complex to the nuclear pore complex (NPC) is mediated by KPNB1 through binding to nucleoporin FxFG repeats and the complex is subsequently translocated through the pore by an energy requiring, Ran-dependent mechanism. At the nucleoplasmic side of the NPC, Ran binds to importin-beta and the three components separate and importin-alpha and -beta are re-exported from the nucleus to the cytoplasm where GTP hydrolysis releases Ran from importin. The directionality of nuclear import is thought to be conferred by an asymmetric distribution of the GTP- and GDP-bound forms of Ran between the cytoplasm and nucleus. In vitro, mediates the nuclear import of human cytomegalovirus UL84 by recognizing a non-classical NLS. This chain is Importin subunit alpha-4 (Kpna3), found in Mus musculus (Mouse).